A 62-amino-acid chain; its full sequence is UPF0434 protein Rpic_2808 (62 aa).

The protein belongs to the UPF0434 family.

This is UPF0434 protein Rpic_2808 from Ralstonia pickettii (strain 12J).